The primary structure comprises 421 residues: Serine/threonine-protein kinase OXI1 (421 aa).

The Protein kinase domain occupies 17–329 (LEVLSLLGRG…VEEIKGHDFF (313 aa)). Residues 23 to 31 (LGRGAKGVV) and lysine 45 contribute to the ATP site. Aspartate 149 acts as the Proton acceptor in catalysis. Positions 167–246 (DFDLSTNLAP…VGTEEYVAPE (80 aa)) are activation loop. Serine 235 carries the post-translational modification Phosphoserine; by PDPK1. In terms of domain architecture, AGC-kinase C-terminal spans 330 to 421 (RGVDWEKVIL…LESDNNFLVF (92 aa)). The PIF signature appears at 418–421 (FLVF).

The protein belongs to the protein kinase superfamily. AGC Ser/Thr protein kinase family. In terms of assembly, interacts with PDK1 and PDK2. In terms of tissue distribution, expressed in roots and root hair cells.

It catalyses the reaction L-seryl-[protein] + ATP = O-phospho-L-seryl-[protein] + ADP + H(+). The catalysed reaction is L-threonyl-[protein] + ATP = O-phospho-L-threonyl-[protein] + ADP + H(+). Its activity is regulated as follows. Activated in response to hydrogen peroxide and cellulase elicitor. Activated by PDK1 in a phosphatidic acid dependent manner. Functionally, involved in oxidative burst-mediated signaling. Required for basal resistance to P.parasitica infection and root hair growth. Partly required for the activation of MPK3 and MPK6 by hydrogen peroxide and cellulase elicitor. This is Serine/threonine-protein kinase OXI1 from Arabidopsis thaliana (Mouse-ear cress).